Consider the following 236-residue polypeptide: tRNA (guanine-N(7)-)-methyltransferase (236 aa).

S-adenosyl-L-methionine-binding residues include Asp35, Glu60, Asn87, and Asp113. Asp113 is a catalytic residue. Residues Lys117 and Asp149 each contribute to the substrate site.

The protein belongs to the class I-like SAM-binding methyltransferase superfamily. TrmB family.

It catalyses the reaction guanosine(46) in tRNA + S-adenosyl-L-methionine = N(7)-methylguanosine(46) in tRNA + S-adenosyl-L-homocysteine. It participates in tRNA modification; N(7)-methylguanine-tRNA biosynthesis. Functionally, catalyzes the formation of N(7)-methylguanine at position 46 (m7G46) in tRNA. The polypeptide is tRNA (guanine-N(7)-)-methyltransferase (Prochlorococcus marinus (strain MIT 9303)).